The primary structure comprises 422 residues: Probable tRNA pseudouridine synthase D 2 (422 aa).

Residue Asp89 is the Nucleophile of the active site. The 212-residue stretch at 160–371 folds into the TRUD domain; sequence GAPNYFDSQR…IYSERKILSI (212 aa).

This sequence belongs to the pseudouridine synthase TruD family.

It carries out the reaction uridine(13) in tRNA = pseudouridine(13) in tRNA. Could be responsible for synthesis of pseudouridine from uracil-13 in transfer RNAs. The chain is Probable tRNA pseudouridine synthase D 2 from Methanocaldococcus jannaschii (strain ATCC 43067 / DSM 2661 / JAL-1 / JCM 10045 / NBRC 100440) (Methanococcus jannaschii).